Here is a 543-residue protein sequence, read N- to C-terminus: T-complex protein 1 subunit eta (543 aa).

M1 carries the post-translational modification N-acetylmethionine. Residue G41 coordinates ADP. G41 is a binding site for ATP. The residue at position 67 (K67) is an N6-acetyllysine. D92 contacts Mg(2+). Positions 93, 94, 95, 96, 164, and 165 each coordinate ADP. ATP is bound at residue G93. Position 96 (S96) interacts with ATP. 2 positions are modified to N6-acetyllysine: K250 and K320. ATP-binding residues include R398 and G409. G409 contributes to the ADP binding site. A Glycyl lysine isopeptide (Lys-Gly) (interchain with G-Cter in SUMO2) cross-link involves residue K430. Residues E494 and R499 each contribute to the ADP site. R499 contributes to the ATP binding site. Residues 524–543 form a disordered region; that stretch reads RSTVDASPAAGRGRGRGRLH. R535 bears the Omega-N-methylarginine mark.

The protein belongs to the TCP-1 chaperonin family. In terms of assembly, component of the chaperonin-containing T-complex (TRiC), a hexadecamer composed of two identical back-to-back stacked rings enclosing a protein folding chamber. Each ring is made up of eight different subunits: TCP1/CCT1, CCT2, CCT3, CCT4, CCT5, CCT6A/CCT6, CCT7, CCT8. Interacts with PACRG. Interacts with DLEC1.

It localises to the cytoplasm. The catalysed reaction is ATP + H2O = ADP + phosphate + H(+). In terms of biological role, component of the chaperonin-containing T-complex (TRiC), a molecular chaperone complex that assists the folding of actin, tubulin and other proteins upon ATP hydrolysis. The TRiC complex mediates the folding of WRAP53/TCAB1, thereby regulating telomere maintenance. The polypeptide is T-complex protein 1 subunit eta (CCT7) (Bos taurus (Bovine)).